The following is a 784-amino-acid chain: Protein Skeletor, isoforms B/C (784 aa).

The N-terminal stretch at 1–28 (MLAMKDKPWLLLFGLLAALSCLASFGDA) is a signal peptide. 2 consecutive DM13 domains span residues 34–143 (GTKI…VSIP) and 151–258 (PQKI…VRLP). Residues 287 to 419 (LAFEVRWAVA…GAESVVWAIG (133 aa)) enclose the DOMON domain. The segment at 451 to 491 (PLPEGARGNSNSSEQEDSAPAAQSSTGGAGYPPAGRPNVEP) is disordered.

In terms of assembly, interacts with Chro and Mgtor as part of a macromolecular complex forming the spindle matrix. Chro colocalizes with Skeletor (Skel) on the chromosomes at interphase and on spindle during metaphase.

It localises to the cytoplasm. The protein localises to the cytoskeleton. Its subcellular location is the spindle. It is found in the nucleus. The protein resides in the nucleolus. It localises to the chromosome. Provides structural support to stabilize and organize the microtubule spindle during mitosis (within embryonic somatic cells) and meiosis (within spermatocytes). The role in mitosis regulation depends on the Ran pathway. The sequence is that of Protein Skeletor, isoforms B/C from Drosophila melanogaster (Fruit fly).